The primary structure comprises 337 residues: Glycerol-3-phosphate dehydrogenase [NAD(P)+] (337 aa).

Residues Trp11, Arg30, and Lys113 each coordinate NADPH. Positions 113, 141, and 143 each coordinate sn-glycerol 3-phosphate. Position 145 (Ala145) interacts with NADPH. The sn-glycerol 3-phosphate site is built by Lys196, Asp249, Ser259, Arg260, and Asn261. Catalysis depends on Lys196, which acts as the Proton acceptor. Arg260 contacts NADPH. NADPH contacts are provided by Val284 and Glu286.

Belongs to the NAD-dependent glycerol-3-phosphate dehydrogenase family.

The protein resides in the cytoplasm. It carries out the reaction sn-glycerol 3-phosphate + NAD(+) = dihydroxyacetone phosphate + NADH + H(+). The enzyme catalyses sn-glycerol 3-phosphate + NADP(+) = dihydroxyacetone phosphate + NADPH + H(+). It functions in the pathway membrane lipid metabolism; glycerophospholipid metabolism. Catalyzes the reduction of the glycolytic intermediate dihydroxyacetone phosphate (DHAP) to sn-glycerol 3-phosphate (G3P), the key precursor for phospholipid synthesis. This chain is Glycerol-3-phosphate dehydrogenase [NAD(P)+], found in Leptothrix cholodnii (strain ATCC 51168 / LMG 8142 / SP-6) (Leptothrix discophora (strain SP-6)).